Reading from the N-terminus, the 648-residue chain is Serine/threonine-protein kinase plk-1 (648 aa).

The segment at 1-24 is disordered; the sequence is MNRLPNIAKPPQKSNQRKEKAPPE. One can recognise a Protein kinase domain in the interval 38–289; that stretch reads YEKGRFLGKG…AKQVQRDGFF (252 aa). ATP is bound by residues 44–52 and lysine 67; that span reads LGKGGFAHC. The Proton acceptor role is filled by aspartate 161. POLO box domains are found at residues 412 to 492 and 514 to 596; these read WISK…YMND and TLRV…RLMS. Residues 612–629 show a composition bias toward low complexity; sequence PRSMAAARSASAGSRGPN.

This sequence belongs to the protein kinase superfamily. Ser/Thr protein kinase family. CDC5/Polo subfamily. In terms of assembly, interacts with mex-5, mex-6 and spat-1. Embryos.

The protein localises to the cytoplasm. It localises to the cytoskeleton. It is found in the microtubule organizing center. The protein resides in the centrosome. Its subcellular location is the midbody. The protein localises to the nucleus. It localises to the chromosome. It is found in the centromere. The protein resides in the kinetochore. The enzyme catalyses L-seryl-[protein] + ATP = O-phospho-L-seryl-[protein] + ADP + H(+). The catalysed reaction is L-threonyl-[protein] + ATP = O-phospho-L-threonyl-[protein] + ADP + H(+). Its function is as follows. Required for oocyte nuclear envelope breakdown before entry of oocyte into spermatheca. In meiotic cells, required for spindle dynamics and probably for spindle attachment to the chromosomes. Zygotic role in the development of the germline and nerve cord. In mitotic cells, plays a role in spindle organization and centrosome maturation. Involved in asymmetric nuclear localization of cdc-25.1 during embryogenesis which affects cell division timing. Together with plk-2, regulates cytoplasm polarity in early embryos. May play a minor role in chromosome pairing and synapsis during oocyte meiosis I. This is Serine/threonine-protein kinase plk-1 (plk-1) from Caenorhabditis elegans.